The following is a 136-amino-acid chain: ATP synthase epsilon chain (136 aa).

The protein belongs to the ATPase epsilon chain family. In terms of assembly, F-type ATPases have 2 components, CF(1) - the catalytic core - and CF(0) - the membrane proton channel. CF(1) has five subunits: alpha(3), beta(3), gamma(1), delta(1), epsilon(1). CF(0) has three main subunits: a, b and c.

It is found in the cellular thylakoid membrane. Its function is as follows. Produces ATP from ADP in the presence of a proton gradient across the membrane. The sequence is that of ATP synthase epsilon chain (atpC) from Prochloron didemni.